The chain runs to 338 residues: Tetraacyldisaccharide 4'-kinase (338 aa).

61 to 68 provides a ligand contact to ATP; it reads TLGGTGKT.

Belongs to the LpxK family.

The enzyme catalyses a lipid A disaccharide + ATP = a lipid IVA + ADP + H(+). Its pathway is glycolipid biosynthesis; lipid IV(A) biosynthesis; lipid IV(A) from (3R)-3-hydroxytetradecanoyl-[acyl-carrier-protein] and UDP-N-acetyl-alpha-D-glucosamine: step 6/6. Functionally, transfers the gamma-phosphate of ATP to the 4'-position of a tetraacyldisaccharide 1-phosphate intermediate (termed DS-1-P) to form tetraacyldisaccharide 1,4'-bis-phosphate (lipid IVA). The sequence is that of Tetraacyldisaccharide 4'-kinase from Nitrosococcus oceani (strain ATCC 19707 / BCRC 17464 / JCM 30415 / NCIMB 11848 / C-107).